Consider the following 314-residue polypeptide: Protein phosphatase PTC7 homolog fig (314 aa).

Residues 43-309 (PYLVTVVQGR…DDITLILSSV (267 aa)) form the PPM-type phosphatase domain. Residues Asp-87, Gly-88, and Asp-232 each coordinate Mn(2+).

It belongs to the PP2C family. The cofactor is Mg(2+). It depends on Mn(2+) as a cofactor.

It catalyses the reaction O-phospho-L-seryl-[protein] + H2O = L-seryl-[protein] + phosphate. It carries out the reaction O-phospho-L-threonyl-[protein] + H2O = L-threonyl-[protein] + phosphate. The protein is Protein phosphatase PTC7 homolog fig of Drosophila melanogaster (Fruit fly).